The chain runs to 212 residues: Ropporin-1 (212 aa).

Residues proline 12–alanine 43 enclose the RIIa domain. Residue serine 56 is modified to Phosphoserine. The segment at valine 209 to glutamate 212 is interaction with RHPN1.

Belongs to the ropporin family. Homodimer. Interacts with AKAP3. May interact with SPA17. Interacts with RHPN1. Interacts with FSCB; the interaction increases upon spermatozoa capacitation conditions. Interacts with CFAP61. In terms of processing, sumoylated, sumoylation decreases upon spermatozoa capacitation conditions. As to expression, testis-specific. Present in the most inner parts of seminiferous tubules (at protein level).

Its subcellular location is the cell projection. The protein localises to the cilium. The protein resides in the flagellum. Important for male fertility. With ROPN1L, involved in fibrous sheath integrity and sperm motility, plays a role in PKA-dependent signaling processes required for spermatozoa capacitation. This is Ropporin-1 (Ropn1) from Mus musculus (Mouse).